The primary structure comprises 124 residues: Small ribosomal subunit protein uS11 (124 aa).

Belongs to the universal ribosomal protein uS11 family. As to quaternary structure, part of the 30S ribosomal subunit. Interacts with proteins S7 and S18. Binds to IF-3.

Functionally, located on the platform of the 30S subunit, it bridges several disparate RNA helices of the 16S rRNA. Forms part of the Shine-Dalgarno cleft in the 70S ribosome. The protein is Small ribosomal subunit protein uS11 of Anaplasma marginale (strain St. Maries).